We begin with the raw amino-acid sequence, 900 residues long: E3 ubiquitin-protein ligase BRE1-like 2 (900 aa).

The disordered stretch occupies residues 1-31; it reads MENQESDEPMQKKPHLLDSVSPNSMARNSSP. The segment covering 20-31 has biased composition (polar residues); that stretch reads VSPNSMARNSSP. Coiled-coil stretches lie at residues 63 to 96, 217 to 300, 437 to 660, and 706 to 737; these read TVLQ…LQLN, EDAT…KDAA, SRIE…AEME, and SEKQ…EQMK. An RING-type zinc finger spans residues 848-887; it reads CGVCFDRPKEVVIVKCYHLFCQQCIQRSLEIRHRKCPGCG.

It belongs to the BRE1 family. As to quaternary structure, may act as a tetramer consisting of two copies of HUB1 and two copies of HUB2. In terms of tissue distribution, ubiquitously expressed.

The protein resides in the nucleus. The enzyme catalyses S-ubiquitinyl-[E2 ubiquitin-conjugating enzyme]-L-cysteine + [acceptor protein]-L-lysine = [E2 ubiquitin-conjugating enzyme]-L-cysteine + N(6)-ubiquitinyl-[acceptor protein]-L-lysine.. Its pathway is protein modification; protein ubiquitination. Its function is as follows. E3 ubiquitin-protein ligase that monoubiquitinates H2B to form H2BK143ub1. H2BK143ub1 gives a specific tag for epigenetic transcriptional activation and is also prerequisite for H3K4me and maybe H3K79me. It thereby plays a central role in histone code and gene regulation. Forms a ubiquitin ligase complex in cooperation with the E2 enzyme UBC2/RAD6. This Arabidopsis thaliana (Mouse-ear cress) protein is E3 ubiquitin-protein ligase BRE1-like 2 (HUB2).